We begin with the raw amino-acid sequence, 1052 residues long: Kinesin-like protein KIF11 (1052 aa).

Residues 17 to 358 (NIQVVVRCRP…LEYAHRAKNI (342 aa)) form the Kinesin motor domain. 104-111 (GQTGTGKT) contacts ATP. Lys-145 carries the post-translational modification N6-acetyllysine. The stretch at 364–478 (VNQKLTKKAL…ETKLQLVKEE (115 aa)) forms a coiled coil. The residue at position 457 (Thr-457) is a Phosphothreonine. Residue Lys-476 forms a Glycyl lysine isopeptide (Lys-Gly) (interchain with G-Cter in SUMO2) linkage. Thr-925 is modified (phosphothreonine). Disordered stretches follow at residues 950-1026 (LQKK…LNPV) and 1033-1052 (EASD…SINL). The stretch at 963-988 (EASKETSQDMDEEREALEQCTEELVS) forms a coiled coil. Positions 1016-1026 (KDKENRGLNPV) are enriched in basic and acidic residues.

The protein belongs to the TRAFAC class myosin-kinesin ATPase superfamily. Kinesin family. BimC subfamily. Interacts with the thyroid hormone receptor in the presence of thyroid hormone. Component of a large chromatin remodeling complex, at least composed of MYSM1, PCAF, RBM10 and KIF11/TRIP5. Interacts with RARRES1 and AGBL2. In terms of processing, phosphorylated exclusively on serine during S phase, but on both serine and Thr-925 during mitosis, so controlling the association of KIF11 with the spindle apparatus (probably during early prophase).

It is found in the cytoplasm. The protein localises to the cytoskeleton. Its subcellular location is the spindle pole. Motor protein required for establishing a bipolar spindle during mitosis. Required in non-mitotic cells for transport of secretory proteins from the Golgi complex to the cell surface. The polypeptide is Kinesin-like protein KIF11 (Kif11) (Mus musculus (Mouse)).